Consider the following 124-residue polypeptide: ATP synthase subunit H, mitochondrial (124 aa).

A mitochondrion-targeting transit peptide spans Met-1 to Tyr-32. Residues Asn-89–His-124 form a disordered region. Positions Glu-100–His-124 are enriched in acidic residues.

Belongs to the ATPase h subunit family. In terms of assembly, F-type ATPases have 2 components, CF(1) - the catalytic core - and CF(0) - the membrane proton channel. In yeast, the dimeric form of ATP synthase consists of 17 polypeptides: alpha, beta, gamma, delta, epsilon, 4 (B), 5 (OSCP), 6 (A), 8, 9 (C), d, E (Tim11), f, g, h, i/j and k.

Its subcellular location is the mitochondrion. It localises to the mitochondrion inner membrane. Mitochondrial membrane ATP synthase (F(1)F(0) ATP synthase or Complex V) produces ATP from ADP in the presence of a proton gradient across the membrane which is generated by electron transport complexes of the respiratory chain. F-type ATPases consist of two structural domains, F(1) - containing the extramembraneous catalytic core and F(0) - containing the membrane proton channel, linked together by a central stalk and a peripheral stalk. During catalysis, ATP synthesis in the catalytic domain of F(1) is coupled via a rotary mechanism of the central stalk subunits to proton translocation. Part of the complex F(0) domain. Minor subunit located with subunit a in the membrane. The polypeptide is ATP synthase subunit H, mitochondrial (ATP14) (Saccharomyces cerevisiae (strain ATCC 204508 / S288c) (Baker's yeast)).